Consider the following 536-residue polypeptide: 2,3-bisphosphoglycerate-independent phosphoglycerate mutase (536 aa).

Mn(2+) contacts are provided by Asp-19 and Ser-69. The active-site Phosphoserine intermediate is Ser-69. Residues His-130, 160 to 161, Arg-192, Arg-198, 262 to 265, and Lys-335 contribute to the substrate site; these read RD and RPDR. Residues Asp-402, His-406, Asp-443, His-444, and His-461 each coordinate Mn(2+).

This sequence belongs to the BPG-independent phosphoglycerate mutase family. Monomer. The cofactor is Mn(2+).

The catalysed reaction is (2R)-2-phosphoglycerate = (2R)-3-phosphoglycerate. It functions in the pathway carbohydrate degradation; glycolysis; pyruvate from D-glyceraldehyde 3-phosphate: step 3/5. In terms of biological role, catalyzes the interconversion of 2-phosphoglycerate and 3-phosphoglycerate. The polypeptide is 2,3-bisphosphoglycerate-independent phosphoglycerate mutase (Gloeobacter violaceus (strain ATCC 29082 / PCC 7421)).